The primary structure comprises 289 residues: NAC domain-containing protein 2 (289 aa).

An NAC domain is found at 7–158; the sequence is LPPGFRFHPT…DWVLCRIYNK (152 aa).

As to quaternary structure, interacts with KIN10 and KIN11.

It is found in the nucleus. The polypeptide is NAC domain-containing protein 2 (NAC002) (Arabidopsis thaliana (Mouse-ear cress)).